The chain runs to 122 residues: MSKALLKFVRLSPTKARLIARQIQGMNAELAIASLEFTPNKAARVLSKVVASAVANGSLDAKSALIVSCRVDAGPVLRRSIPRAKGRATAIRKPTSHVFVEVVEGKEMKSSKSHKKNQAEGK.

Positions 103–122 are disordered; that stretch reads VEGKEMKSSKSHKKNQAEGK.

It belongs to the universal ribosomal protein uL22 family. As to quaternary structure, part of the 50S ribosomal subunit.

Its function is as follows. This protein binds specifically to 23S rRNA; its binding is stimulated by other ribosomal proteins, e.g. L4, L17, and L20. It is important during the early stages of 50S assembly. It makes multiple contacts with different domains of the 23S rRNA in the assembled 50S subunit and ribosome. The globular domain of the protein is located near the polypeptide exit tunnel on the outside of the subunit, while an extended beta-hairpin is found that lines the wall of the exit tunnel in the center of the 70S ribosome. This chain is Large ribosomal subunit protein uL22, found in Helicobacter pylori (strain P12).